Consider the following 222-residue polypeptide: Thiamine-phosphate synthase (222 aa).

4-amino-2-methyl-5-(diphosphooxymethyl)pyrimidine contacts are provided by residues 40-44 (QLRDK) and Asn-81. Mg(2+) contacts are provided by Asp-82 and Asp-101. A 4-amino-2-methyl-5-(diphosphooxymethyl)pyrimidine-binding site is contributed by Ser-120. 146-148 (TPT) provides a ligand contact to 2-[(2R,5Z)-2-carboxy-4-methylthiazol-5(2H)-ylidene]ethyl phosphate. Lys-149 contacts 4-amino-2-methyl-5-(diphosphooxymethyl)pyrimidine. Gly-178 is a binding site for 2-[(2R,5Z)-2-carboxy-4-methylthiazol-5(2H)-ylidene]ethyl phosphate.

The protein belongs to the thiamine-phosphate synthase family. Mg(2+) serves as cofactor.

The enzyme catalyses 2-[(2R,5Z)-2-carboxy-4-methylthiazol-5(2H)-ylidene]ethyl phosphate + 4-amino-2-methyl-5-(diphosphooxymethyl)pyrimidine + 2 H(+) = thiamine phosphate + CO2 + diphosphate. The catalysed reaction is 2-(2-carboxy-4-methylthiazol-5-yl)ethyl phosphate + 4-amino-2-methyl-5-(diphosphooxymethyl)pyrimidine + 2 H(+) = thiamine phosphate + CO2 + diphosphate. It catalyses the reaction 4-methyl-5-(2-phosphooxyethyl)-thiazole + 4-amino-2-methyl-5-(diphosphooxymethyl)pyrimidine + H(+) = thiamine phosphate + diphosphate. The protein operates within cofactor biosynthesis; thiamine diphosphate biosynthesis; thiamine phosphate from 4-amino-2-methyl-5-diphosphomethylpyrimidine and 4-methyl-5-(2-phosphoethyl)-thiazole: step 1/1. Functionally, condenses 4-methyl-5-(beta-hydroxyethyl)thiazole monophosphate (THZ-P) and 2-methyl-4-amino-5-hydroxymethyl pyrimidine pyrophosphate (HMP-PP) to form thiamine monophosphate (TMP). This Mycobacterium tuberculosis (strain ATCC 25177 / H37Ra) protein is Thiamine-phosphate synthase.